The chain runs to 312 residues: Olfactory receptor 2L13 (312 aa).

Residues 1–24 (MEKWNHTSNDFILLGLLPPNQTGI) are Extracellular-facing. N-linked (GlcNAc...) asparagine glycosylation is found at Asn-5 and Asn-20. Residues 25–48 (FLLCLIILIFFLASVGNSAMIHLI) form a helical membrane-spanning segment. The Cytoplasmic portion of the chain corresponds to 49–56 (HVDPRLHT). A helical transmembrane segment spans residues 57–78 (PMYFLLSQLSLMDLMYISTTVP). Residues 79–99 (KMAYNFLSGQKGISFLGCGVQ) lie on the Extracellular side of the membrane. A disulfide bridge connects residues Cys-96 and Cys-188. The helical transmembrane segment at 100–119 (SFFFLTMACSEGLLLTSMAY) threads the bilayer. Residues 120–138 (DRYLAICHSLYYPIRMSKM) lie on the Cytoplasmic side of the membrane. Residues 139–157 (MCVKMIGGSWTLGSINSLA) traverse the membrane as a helical segment. Topologically, residues 158–194 (HTVFALHIPYCRSRAIDHFFCDVPAMLLLACTDTWVY) are extracellular. The chain crosses the membrane as a helical span at residues 195–218 (EYMVFVSTSLFLLFPFIGITSSCG). Topologically, residues 219–235 (RVLFAVYHMHSKEGRKK) are cytoplasmic. The chain crosses the membrane as a helical span at residues 236 to 258 (AFTTISTHLTVVIFYYAPFVYTY). At 259–271 (LRPRNLRSPAEDK) the chain is on the extracellular side. Residues 272–291 (ILAVFYTILTPMLNPIIYSL) traverse the membrane as a helical segment. The Cytoplasmic portion of the chain corresponds to 292–312 (RNKEVLGAMRRVFGIFSFLKE).

Belongs to the G-protein coupled receptor 1 family.

It localises to the cell membrane. Functionally, odorant receptor. This chain is Olfactory receptor 2L13 (OR2L13), found in Homo sapiens (Human).